The primary structure comprises 399 residues: Elongation factor Tu (399 aa).

The tr-type G domain maps to 10–204 (KPHVNIGTIG…AVDASIPEPE (195 aa)). Positions 19–26 (GHVDHGKT) are G1. Residue 19–26 (GHVDHGKT) participates in GTP binding. T26 is a binding site for Mg(2+). The tract at residues 60-64 (GITIN) is G2. The segment at 81–84 (DCPG) is G3. GTP-binding positions include 81 to 85 (DCPGH) and 136 to 139 (NKCD). Residues 136-139 (NKCD) are G4. The G5 stretch occupies residues 174 to 176 (SGL).

The protein belongs to the TRAFAC class translation factor GTPase superfamily. Classic translation factor GTPase family. EF-Tu/EF-1A subfamily. In terms of assembly, monomer.

It is found in the cytoplasm. The catalysed reaction is GTP + H2O = GDP + phosphate + H(+). GTP hydrolase that promotes the GTP-dependent binding of aminoacyl-tRNA to the A-site of ribosomes during protein biosynthesis. The protein is Elongation factor Tu of Synechococcus sp. (strain CC9311).